We begin with the raw amino-acid sequence, 297 residues long: tRNA pseudouridine synthase B (297 aa).

Aspartate 39 functions as the Nucleophile in the catalytic mechanism.

The protein belongs to the pseudouridine synthase TruB family. Type 1 subfamily.

The enzyme catalyses uridine(55) in tRNA = pseudouridine(55) in tRNA. Functionally, responsible for synthesis of pseudouridine from uracil-55 in the psi GC loop of transfer RNAs. In Lactobacillus johnsonii (strain CNCM I-12250 / La1 / NCC 533), this protein is tRNA pseudouridine synthase B.